We begin with the raw amino-acid sequence, 468 residues long: MKKLRTRYAPSPTGYLHIGGARTALFNYLLAKHYNGDFIIRIEDTDVKRNIADGEASQIENLKWLNIEANESPLKPNEKYGPYRQSQKLEKYLKIAHELIEKGYAYKAYDNSEELEEQKKHSEKLGVASFRYQRDFLKISEEEKQKRDASGAYSIRVICPKNTTYQWDDLVRGNIAVNSNDIGDWIIIKSDDYPTYNFAVVIDDIDMEISHILRGEEHITNTPKQMMIYDYLNAPKPLFGHLTIITNMEGKKLSKRDLSLKQFIHEYKEEGYNSQAIFNFLTLLGWTDEKARELMDHDEIIKSFLYTRLSKSPSKFDITKMQWFSKQYWKNTPNEELIKILNLNDYDNDWINLFLDLYKENIYSLNQLKNYLKIYKQANLNQEKDLDLNDAEKNVVKSFSSYIDYSNFSVNQIQEAINKTQEKLSIKGKNLFLPIRKATTFQEHGPELAKAIYLFGSEIIEKRMKKWK.

The 'HIGH' region signature appears at 10-20 (PSPTGYLHIGG). The 'KMSKS' region signature appears at 252-256 (KLSKR). Lysine 255 is an ATP binding site.

This sequence belongs to the class-I aminoacyl-tRNA synthetase family. Glutamate--tRNA ligase type 1 subfamily. In terms of assembly, monomer.

It is found in the cytoplasm. It carries out the reaction tRNA(Glu) + L-glutamate + ATP = L-glutamyl-tRNA(Glu) + AMP + diphosphate. Catalyzes the attachment of glutamate to tRNA(Glu) in a two-step reaction: glutamate is first activated by ATP to form Glu-AMP and then transferred to the acceptor end of tRNA(Glu). This is Glutamate--tRNA ligase from Mycoplasmopsis pulmonis (strain UAB CTIP) (Mycoplasma pulmonis).